We begin with the raw amino-acid sequence, 426 residues long: Histidine--tRNA ligase (426 aa).

Belongs to the class-II aminoacyl-tRNA synthetase family. As to quaternary structure, homodimer.

It is found in the cytoplasm. It carries out the reaction tRNA(His) + L-histidine + ATP = L-histidyl-tRNA(His) + AMP + diphosphate + H(+). The sequence is that of Histidine--tRNA ligase from Streptococcus pyogenes serotype M3 (strain ATCC BAA-595 / MGAS315).